The chain runs to 54 residues: Large ribosomal subunit protein bL33 (54 aa).

Belongs to the bacterial ribosomal protein bL33 family.

The chain is Large ribosomal subunit protein bL33 from Caldicellulosiruptor saccharolyticus (strain ATCC 43494 / DSM 8903 / Tp8T 6331).